Reading from the N-terminus, the 572-residue chain is MAAKEYDYIIIGAGSAGNVLATRLTEDRDVTVLLLEAGGPDYRFDFRTQMPAALAYPLQGRRYNWAYETDPEPFMNNRRMECGRGKGLGGSSLINGMCYIRGNALDYDGWAERKGLENWTYLDCLPYFRKAETRDAGANDYHGGDGPVHVTTSKRGVNPLFEAMVEAGVQAGYPRTDDLNGYQQEGFGPMDRTVTANGRRASTARGYLDQARPRPNLTIVTYATTDRILFSGKRAQGVVYLDGQAQITAHARREVLLCSGAIASPQILQRSGVGPGGWLRDLDIPVVLDLPGVGQNLQDHLEMYMQYECKEPVSLYPALLLRNQPAIGIEWMLKGTGIGASNHFEAGGFIRTRDDDPWPNIQYHFLPVAINYNGTNAIKMHGFQAHVGSMRSPSRGRVKLRSRDPREHPSILFNYMAEALDWREFRDAIRITREIIAQPALDRFRGRELSPGAELQSDAQIDAFVRARAETAYHPSCSCAMGYDDMAVVDGEGRVHGLEGLRVVDASIMPRITTGNLNAPTIMLAEKIADRIRGRAPLARSTAPYYVANGAPARGAKHVEHAPAPSVAAHTH.

FAD is bound at residue 7–36 (DYIIIGAGSAGNVLATRLTEDRDVTVLLLE). His474 (proton acceptor) is an active-site residue.

It belongs to the GMC oxidoreductase family. The cofactor is FAD.

The enzyme catalyses choline + A = betaine aldehyde + AH2. The catalysed reaction is betaine aldehyde + NAD(+) + H2O = glycine betaine + NADH + 2 H(+). The protein operates within amine and polyamine biosynthesis; betaine biosynthesis via choline pathway; betaine aldehyde from choline (cytochrome c reductase route): step 1/1. Involved in the biosynthesis of the osmoprotectant glycine betaine. Catalyzes the oxidation of choline to betaine aldehyde and betaine aldehyde to glycine betaine at the same rate. In Paraburkholderia phymatum (strain DSM 17167 / CIP 108236 / LMG 21445 / STM815) (Burkholderia phymatum), this protein is Oxygen-dependent choline dehydrogenase.